The chain runs to 163 residues: Phosphopantetheine adenylyltransferase (163 aa).

Ser-9 provides a ligand contact to substrate. ATP is bound by residues 9-10 (SF) and His-17. Positions 41, 73, and 87 each coordinate substrate. ATP contacts are provided by residues 88 to 90 (GLR), Glu-98, and 124 to 130 (YTYVSST).

Belongs to the bacterial CoaD family. In terms of assembly, homohexamer. Requires Mg(2+) as cofactor.

Its subcellular location is the cytoplasm. It catalyses the reaction (R)-4'-phosphopantetheine + ATP + H(+) = 3'-dephospho-CoA + diphosphate. The protein operates within cofactor biosynthesis; coenzyme A biosynthesis; CoA from (R)-pantothenate: step 4/5. Reversibly transfers an adenylyl group from ATP to 4'-phosphopantetheine, yielding dephospho-CoA (dPCoA) and pyrophosphate. In Fusobacterium nucleatum subsp. nucleatum (strain ATCC 25586 / DSM 15643 / BCRC 10681 / CIP 101130 / JCM 8532 / KCTC 2640 / LMG 13131 / VPI 4355), this protein is Phosphopantetheine adenylyltransferase.